Consider the following 309-residue polypeptide: Interferon-inducible double-stranded RNA-dependent protein kinase activator A homolog A (309 aa).

The tract at residues 1–22 (MSQERFPAAPKMSSEKPTSLDA) is disordered. DRBM domains are found at residues 31–98 (TPIQ…ILRG), 123–191 (NPVG…KFKT), and 236–304 (DYVK…YLKI).

The protein belongs to the PRKRA family. As to quaternary structure, homodimer. Interacts with dicer1 and eif2ak2/pkr. Also able to interact with dsRNA.

It localises to the cytoplasm. The protein localises to the perinuclear region. The protein resides in the nucleus. Activates eif2ak2/pkr in the absence of double-stranded RNA (dsRNA), leading to phosphorylation of eif2s1/efi2-alpha and inhibition of translation and induction of apoptosis. Required for siRNA production by dicer1 and for subsequent siRNA-mediated post-transcriptional gene silencing. Does not seem to be required for processing of pre-miRNA to miRNA by dicer1. The chain is Interferon-inducible double-stranded RNA-dependent protein kinase activator A homolog A (prkra-a) from Xenopus laevis (African clawed frog).